The sequence spans 443 residues: Amino-acid acetyltransferase (443 aa).

The region spanning 296-435 (EQIRRATIND…KEMYNYQRRS (140 aa)) is the N-acetyltransferase domain.

The protein belongs to the acetyltransferase family. ArgA subfamily. Homohexamer.

The protein localises to the cytoplasm. It catalyses the reaction L-glutamate + acetyl-CoA = N-acetyl-L-glutamate + CoA + H(+). Its pathway is amino-acid biosynthesis; L-arginine biosynthesis; N(2)-acetyl-L-ornithine from L-glutamate: step 1/4. In Enterobacter sp. (strain 638), this protein is Amino-acid acetyltransferase.